A 726-amino-acid polypeptide reads, in one-letter code: Dipeptidyl-peptidase 5 (726 aa).

A signal peptide spans 1-19 (MAPAKWLIASLAFASTGLA). Residues Asn-96 and Asn-252 are each glycosylated (N-linked (GlcNAc...) asparagine). A disordered region spans residues 268 to 292 (VAEPINKRNGPRTPHGIEGASSSPV). The N-linked (GlcNAc...) asparagine glycan is linked to Asn-485. The active-site Charge relay system is Ser-558. An N-linked (GlcNAc...) asparagine glycan is attached at Asn-605. Active-site charge relay system residues include Asp-641 and His-673. Asn-699 carries an N-linked (GlcNAc...) asparagine glycan.

Belongs to the peptidase S9C family.

The protein localises to the secreted. Extracellular dipeptidyl-peptidase which removes N-terminal dipeptides sequentially from polypeptides having unsubstituted N-termini. Contributes to pathogenicity. In Arthroderma otae (Microsporum canis), this protein is Dipeptidyl-peptidase 5 (DPP5).